We begin with the raw amino-acid sequence, 173 residues long: ATP-dependent protease subunit HslV (173 aa).

Thr-2 is an active-site residue. Na(+) contacts are provided by Gly-158, Asp-161, and Ser-164.

The protein belongs to the peptidase T1B family. HslV subfamily. As to quaternary structure, a double ring-shaped homohexamer of HslV is capped on each side by a ring-shaped HslU homohexamer. The assembly of the HslU/HslV complex is dependent on binding of ATP.

It is found in the cytoplasm. It catalyses the reaction ATP-dependent cleavage of peptide bonds with broad specificity.. With respect to regulation, allosterically activated by HslU binding. Functionally, protease subunit of a proteasome-like degradation complex believed to be a general protein degrading machinery. The sequence is that of ATP-dependent protease subunit HslV from Mannheimia haemolytica (Pasteurella haemolytica).